Here is a 1189-residue protein sequence, read N- to C-terminus: Disabled homolog 2-interacting protein (1189 aa).

The disordered stretch occupies residues 1-75; it reads MSAGGSARKS…EPSAATPFRV (75 aa). Residues 20–38 show a composition bias toward basic residues; the sequence is LLRRPRLQRQRSRSRSRTR. Over residues 39 to 49 the composition is skewed to basic and acidic residues; the sequence is PARESPQERPG. In terms of domain architecture, PH spans 101–202; that stretch reads SFRHILPGFR…WMENLRRAVH (102 aa). In terms of domain architecture, C2 spans 193 to 311; sequence WMENLRRAVH…AGRQFVEKWY (119 aa). The Ras-GAP domain maps to 387–595; it reads GKVKDFLTDL…TNMQRFLLEI (209 aa). The necessary for interaction with AKT1 stretch occupies residues 646 to 943; the sequence is LRDVHTALST…RTPPNLLSTL (298 aa). The span at 653–668 shows a compositional bias: polar residues; the sequence is LSTPGSGQLPGTNDLA. 2 disordered regions span residues 653 to 678 and 715 to 742; these read LSTP…SSSI and RSSG…MANG. Low complexity predominate over residues 669–678; it reads STPGSGSSSI. Residues 715 to 731 show a composition bias toward polar residues; the sequence is RSSGVQPSPARSSSYSE. Phosphoserine; by MAP3K5 and RIPK1 is present on serine 728. The residue at position 747 (serine 747) is a Phosphoserine. 5 disordered regions span residues 803-823, 843-865, 895-998, 1015-1035, and 1164-1189; these read AGQT…PQLL, PRGL…NSEE, SLTE…SPNA, EDEG…KDEL, and RNGI…SSNC. A compositionally biased stretch (low complexity) spans 852-865; it reads EGHSSLSSHSNSEE. The segment covering 919-931 has biased composition (pro residues); the sequence is QPPPPPPPPPPAP. Composition is skewed to polar residues over residues 938 to 955 and 966 to 976; these read NLLS…TLAS and RLRQQSSSSKG. Phosphoserine is present on residues serine 978 and serine 995. The span at 1023–1035 shows a compositional bias: basic and acidic residues; sequence PPHRDRLRSKDEL. A coiled-coil region spans residues 1026–1159; sequence RDRLRSKDEL…SALTQLKERY (134 aa).

As to quaternary structure, on plasma membrane, exists in an inactive form complexed with TNFR1; in response to TNF-alpha, dissociates from TNFR1 complex, translocates to cytoplasm and forms part of an intracellular signaling complex comprising TRADD, RIPK1, TRAF2 and MAP3K5. Interacts with DAB1. Interacts (via NPXY motif) with DAB2 (via PID domain). Interacts (via PH domain) with ERN1. Part of a cytoplasmic complex made of HIPK1, DAB2IP and MAP3K5 in response to TNF-alpha; this complex formation promotes MAP3K5-JNK activation and subsequent apoptosis. Interacts (via N-terminal domain) with JAK2; the interaction occurs in a IFNG/IFN-gamma-dependent manner and inhibits JAK2 autophosphorylation activity. Interacts (via C2 domain) with GSK3B; the interaction stimulates GSK3B kinase activation. Interacts (via C2 domain) with PPP2CA. Interacts (via proline-rich motif) with a regulatory p85 subunit (via SH3 domain) of the PI3K complex; the interaction inhibits the PI3K-AKT complex activity in a TNF-alpha-dependent manner in prostate cancer (PCa) cells. Interacts with AKT1; the interaction is increased in a TNF-alpha-induced manner. Interacts (via C2 domain and active form preferentially) with KDR/VEGFR2 (tyrosine-phosphorylated active form preferentially); the interaction occurs at the late phase of VEGFA response and inhibits KDR/VEGFR2 activity. Interacts (via N-terminus C2 domain) with MAP3K5 ('Ser-966' dephosphorylated form preferentially); the interaction occurs in a TNF-alpha-induced manner. Interacts (via Ras-GAP domain) with the catalytic subunit of protein phosphatase PP2A; the interaction occurs in resting endothelial cells, is further enhanced by TNF-alpha stimulation and is required to bridge PP2A to MAP3K5. Interacts (via C-terminus PER domain) with TRAF2 (via zinc fingers); the interaction occurs in a TNF-alpha-dependent manner. Interacts with 14-3-3 proteins; the interaction occurs in a TNF-alpha-dependent manner. Interacts (via Ras-GAP domain) with RIPK1 (via kinase domain); the interaction occurs in a TNF-alpha-dependent manner. Interacts with RAB40C; acts as a GAP for RAB40C. Post-translationally, in response to TNF-alpha-induction, phosphorylated at Ser-728; phosphorylation leads to a conformational change, and thus, increases its association with 14-3-3 proteins, MAP3K5, RIPK1 and TRAF2 in endothelial cells; also stimulates regulatory p85 subunit sequestring and PI3K-p85 complex activity inhibition. Expressed in endothelial and vascular smooth muscle cells (VSMCs). Expressed in prostate epithelial but poorly in prostate cancer cells. Poorly expressed in medulloblastoma cells compared to cerebellar precursor proliferating progenitor cells (at protein level). Low expression in prostate. Down-regulated in prostate cancer.

It localises to the cytoplasm. The protein resides in the cell membrane. Its subcellular location is the membrane. It is found in the cell projection. The protein localises to the dendrite. Functionally, functions as a scaffold protein implicated in the regulation of a large spectrum of both general and specialized signaling pathways. Involved in several processes such as innate immune response, inflammation and cell growth inhibition, apoptosis, cell survival, angiogenesis, cell migration and maturation. Also plays a role in cell cycle checkpoint control; reduces G1 phase cyclin levels resulting in G0/G1 cell cycle arrest. Mediates signal transduction by receptor-mediated inflammatory signals, such as the tumor necrosis factor (TNF), interferon (IFN) or lipopolysaccharide (LPS). Modulates the balance between phosphatidylinositol 3-kinase (PI3K)-AKT-mediated cell survival and apoptosis stimulated kinase (MAP3K5)-JNK signaling pathways; sequesters both AKT1 and MAP3K5 and counterbalances the activity of each kinase by modulating their phosphorylation status in response to pro-inflammatory stimuli. Acts as a regulator of the endoplasmic reticulum (ER) unfolded protein response (UPR) pathway; specifically involved in transduction of the ER stress-response to the JNK cascade through ERN1. Mediates TNF-alpha-induced apoptosis activation by facilitating dissociation of inhibitor 14-3-3 from MAP3K5; recruits the PP2A phosphatase complex which dephosphorylates MAP3K5 on 'Ser-966', leading to the dissociation of 13-3-3 proteins and activation of the MAP3K5-JNK signaling pathway in endothelial cells. Also mediates TNF/TRAF2-induced MAP3K5-JNK activation, while it inhibits CHUK-NF-kappa-B signaling. Acts a negative regulator in the IFN-gamma-mediated JAK-STAT signaling cascade by inhibiting smooth muscle cell (VSMCs) proliferation and intimal expansion, and thus, prevents graft arteriosclerosis (GA). Acts as a GTPase-activating protein (GAP) for the ADP ribosylation factor 6 (ARF6), Ras and RAB40C. Promotes hydrolysis of the ARF6-bound GTP and thus, negatively regulates phosphatidylinositol 4,5-bisphosphate (PIP2)-dependent TLR4-TIRAP-MyD88 and NF-kappa-B signaling pathways in endothelial cells in response to lipopolysaccharides (LPS). Binds specifically to phosphatidylinositol 4-phosphate (PtdIns4P) and phosphatidylinositol 3-phosphate (PtdIns3P). In response to vascular endothelial growth factor (VEGFA), acts as a negative regulator of the VEGFR2-PI3K-mediated angiogenic signaling pathway by inhibiting endothelial cell migration and tube formation. In the developing brain, promotes both the transition from the multipolar to the bipolar stage and the radial migration of cortical neurons from the ventricular zone toward the superficial layer of the neocortex in a glial-dependent locomotion process. Probable downstream effector of the Reelin signaling pathway; promotes Purkinje cell (PC) dendrites development and formation of cerebellar synapses. Also functions as a tumor suppressor protein in prostate cancer progression; prevents cell proliferation and epithelial-to-mesenchymal transition (EMT) through activation of the glycogen synthase kinase-3 beta (GSK3B)-induced beta-catenin and inhibition of PI3K-AKT and Ras-MAPK survival downstream signaling cascades, respectively. In Homo sapiens (Human), this protein is Disabled homolog 2-interacting protein.